A 294-amino-acid polypeptide reads, in one-letter code: Ankyrin repeat and SOCS box protein 9 (294 aa).

Met1 is modified (N-acetylmethionine). 6 ANK repeats span residues 35–64, 68–97, 101–130, 133–162, 166–195, and 198–227; these read SDWS…AVNI, DHVS…QVNG, DWHT…SVQP, DLAS…NIDH, HLGT…DVNQ, and GQDS…DTQA. Residue Ser51 is modified to Phosphoserine. The region spanning 240–294 is the SOCS box domain; the sequence is PPESPLAQLFLEREGPPSLMQLCRLRIRKCFGIQQHHKITKLVLPEDLKQFLLHL.

This sequence belongs to the ankyrin SOCS box (ASB) family. In terms of assembly, substrate-recognition component of the ECS(ASB9) complex, composed of ASB9, CUL5, ELOB, ELOC and RNF7/RBX2. Predominantly expressed in testis, kidney, and liver.

Its subcellular location is the mitochondrion. It functions in the pathway protein modification; protein ubiquitination. Functionally, substrate-recognition component of a cullin-5-RING E3 ubiquitin-protein ligase complex (ECS complex, also named CRL5 complex), which mediates the ubiquitination and subsequent proteasomal degradation of target proteins. The ECS(ASB9) complex catalyzes ubiquitination of creatine kinases CKB and CKMT1A. Does not interact with the Elongin BC complex, likely to be a negative regulator of isoform 1. This is Ankyrin repeat and SOCS box protein 9 from Homo sapiens (Human).